Here is a 145-residue protein sequence, read N- to C-terminus: MKGLLQRVRGARVEVAGEIVGAIDQGLLVLVAVEPEDTREQADKLLHKLLNYRVFSDEQGKMNLSLKDVGGGLLLVSQFTLAADTRSGMRPSFSTAAPPALGAELFDYLLQQAQGQHADVASGRFGADMQVHLVNDGPVTFLLQI.

The Gly-cisPro motif, important for rejection of L-amino acids signature appears at 137-138 (GP).

This sequence belongs to the DTD family. In terms of assembly, homodimer.

The protein localises to the cytoplasm. It carries out the reaction glycyl-tRNA(Ala) + H2O = tRNA(Ala) + glycine + H(+). It catalyses the reaction a D-aminoacyl-tRNA + H2O = a tRNA + a D-alpha-amino acid + H(+). In terms of biological role, an aminoacyl-tRNA editing enzyme that deacylates mischarged D-aminoacyl-tRNAs. Also deacylates mischarged glycyl-tRNA(Ala), protecting cells against glycine mischarging by AlaRS. Acts via tRNA-based rather than protein-based catalysis; rejects L-amino acids rather than detecting D-amino acids in the active site. By recycling D-aminoacyl-tRNA to D-amino acids and free tRNA molecules, this enzyme counteracts the toxicity associated with the formation of D-aminoacyl-tRNA entities in vivo and helps enforce protein L-homochirality. The polypeptide is D-aminoacyl-tRNA deacylase (Pseudomonas putida (strain W619)).